Reading from the N-terminus, the 317-residue chain is Methionyl-tRNA formyltransferase (317 aa).

Residue 110–113 participates in (6S)-5,6,7,8-tetrahydrofolate binding; the sequence is SLLP.

The protein belongs to the Fmt family.

It carries out the reaction L-methionyl-tRNA(fMet) + (6R)-10-formyltetrahydrofolate = N-formyl-L-methionyl-tRNA(fMet) + (6S)-5,6,7,8-tetrahydrofolate + H(+). Attaches a formyl group to the free amino group of methionyl-tRNA(fMet). The formyl group appears to play a dual role in the initiator identity of N-formylmethionyl-tRNA by promoting its recognition by IF2 and preventing the misappropriation of this tRNA by the elongation apparatus. In Lactiplantibacillus plantarum (strain ATCC BAA-793 / NCIMB 8826 / WCFS1) (Lactobacillus plantarum), this protein is Methionyl-tRNA formyltransferase.